We begin with the raw amino-acid sequence, 1141 residues long: Myosin-binding protein C, slow-type (1141 aa).

The span at 1-10 shows a compositional bias: basic and acidic residues; that stretch reads MPEPTKKEEN. The tract at residues 1-51 is disordered; that stretch reads MPEPTKKEENEVPAPAPPPEEPSKEKEAGTTPAKDWTLVETPPGEEQAKQN. 5 consecutive Ig-like C2-type domains span residues 72 to 144, 251 to 340, 341 to 431, 432 to 520, and 522 to 619; these read GEDI…RCEV, SAAF…VREP, PIMV…VDLK, PLKI…HVID, and PKII…VVDF. At Thr-406 the chain carries Phosphothreonine. Ser-611 is modified (phosphoserine). 2 consecutive Fibronectin type-III domains span residues 622–721 and 722–833; these read PPVA…TSPP and TLLT…VKEI. Phosphothreonine is present on Thr-798. Position 823 is a phosphotyrosine (Tyr-823). The Ig-like C2-type 6 domain occupies 837 to 931; it reads PKIRIPRHLK…ASIDIQIIDR (95 aa). The Fibronectin type-III 3 domain maps to 934–1029; it reads PPQIVKIEDV…TKESAVIARD (96 aa). The Ig-like C2-type 7 domain occupies 1047 to 1141; it reads PMFTQPLVNT…CKLEVKVIAQ (95 aa).

It belongs to the immunoglobulin superfamily. MyBP family. Interacts with USP25 (isoform USP25m only); the interaction prevents proteasomal degradation of MYBPC1.

In terms of biological role, thick filament-associated protein located in the crossbridge region of vertebrate striated muscle a bands. Slow skeletal protein that binds to both myosin and actin. In vitro, binds to native thin filaments and modifies the activity of actin-activated myosin ATPase. May modulate muscle contraction or may play a more structural role. This Homo sapiens (Human) protein is Myosin-binding protein C, slow-type (MYBPC1).